The chain runs to 138 residues: Basic phospholipase A2 canebraxin B (138 aa).

Positions 1-16 (MRALWIVAVLLVAVEG) are cleaved as a signal peptide. 7 disulfides stabilise this stretch: cysteine 42–cysteine 131, cysteine 44–cysteine 60, cysteine 59–cysteine 111, cysteine 65–cysteine 138, cysteine 66–cysteine 104, cysteine 73–cysteine 97, and cysteine 91–cysteine 102. Residues tyrosine 43, glycine 45, and glycine 47 each coordinate Ca(2+). Histidine 63 is an active-site residue. A Ca(2+)-binding site is contributed by aspartate 64. The active site involves aspartate 105.

This sequence belongs to the phospholipase A2 family. Group II subfamily. In terms of assembly, heterodimer of an acidic subunit and a basic chain. The acidic subunit is non-toxic, without enzymatic activity and comprises 3 peptides that are cross-linked by 7 disulfide bridges. The basic subunit is toxic, has phospholipase A2 activity and is composed of a single chain. The cofactor is Ca(2+). As to expression, expressed by the venom gland.

It localises to the secreted. It carries out the reaction a 1,2-diacyl-sn-glycero-3-phosphocholine + H2O = a 1-acyl-sn-glycero-3-phosphocholine + a fatty acid + H(+). In terms of biological role, snake venom phospholipase A2 (PLA2) that shows presynaptic neurotoxicity. PLA2 catalyzes the calcium-dependent hydrolysis of the 2-acyl groups in 3-sn-phosphoglycerides. This chain is Basic phospholipase A2 canebraxin B, found in Crotalus horridus (Timber rattlesnake).